The sequence spans 273 residues: MLKLVDNTTTRDYISHHLSHLQLNLNNFTLVNHPDIKSFWILNIDSIFFTLLLGIIFLLIFFYTAKTATSGIPSKLQTIVELLVSFIDKNVNDILFCKNKLIAPLALTIFIWIFLMNLMDLLAVDMLPYIAMYILHIPALRVVPSADINITLSLALGVFILIIYYNLKIKGITGFIKELTMQPFNHLIFIPLNFILESVSLLSKPISLALRLFGNIYAGELVFILIAGLLPWWSQWIISVPWALFHIIVITLQAFIFMVLTVVYIAMAYEQHK.

7 helical membrane-spanning segments follow: residues 41–61 (ILNI…LLIF), 101–121 (LIAP…LMDL), 122–142 (LAVD…ALRV), 143–163 (VPSA…ILII), 183–203 (PFNH…SLLS), 221–241 (LVFI…ISVP), and 247–267 (IIVI…YIAM).

This sequence belongs to the ATPase A chain family. As to quaternary structure, F-type ATPases have 2 components, CF(1) - the catalytic core - and CF(0) - the membrane proton channel. CF(1) has five subunits: alpha(3), beta(3), gamma(1), delta(1), epsilon(1). CF(0) has three main subunits: a(1), b(2) and c(9-12). The alpha and beta chains form an alternating ring which encloses part of the gamma chain. CF(1) is attached to CF(0) by a central stalk formed by the gamma and epsilon chains, while a peripheral stalk is formed by the delta and b chains.

Its subcellular location is the cell membrane. Its function is as follows. Key component of the proton channel; it plays a direct role in the translocation of protons across the membrane. This is ATP synthase subunit a from Baumannia cicadellinicola subsp. Homalodisca coagulata.